A 129-amino-acid chain; its full sequence is Small ribosomal subunit protein uS11 (129 aa).

This sequence belongs to the universal ribosomal protein uS11 family. As to quaternary structure, part of the 30S ribosomal subunit. Interacts with proteins S7 and S18. Binds to IF-3.

In terms of biological role, located on the platform of the 30S subunit, it bridges several disparate RNA helices of the 16S rRNA. Forms part of the Shine-Dalgarno cleft in the 70S ribosome. In Azobacteroides pseudotrichonymphae genomovar. CFP2, this protein is Small ribosomal subunit protein uS11.